We begin with the raw amino-acid sequence, 308 residues long: Tryptophan 2,3-dioxygenase (308 aa).

The interval 1–35 (MQPPGDNAPAGCPFSGAHAAQPAHEAPHVPGDAAG) is disordered. A compositionally biased stretch (low complexity) spans 17 to 30 (AHAAQPAHEAPHVP). Substrate-binding positions include 77–81 (FIIQH), tyrosine 139, and arginine 143. Position 266 (histidine 266) interacts with heme. Threonine 280 lines the substrate pocket.

Belongs to the tryptophan 2,3-dioxygenase family. As to quaternary structure, homotetramer. Requires heme as cofactor.

It catalyses the reaction L-tryptophan + O2 = N-formyl-L-kynurenine. It functions in the pathway amino-acid degradation; L-tryptophan degradation via kynurenine pathway; L-kynurenine from L-tryptophan: step 1/2. Its function is as follows. Heme-dependent dioxygenase that catalyzes the oxidative cleavage of the L-tryptophan (L-Trp) pyrrole ring and converts L-tryptophan to N-formyl-L-kynurenine. Catalyzes the oxidative cleavage of the indole moiety. The sequence is that of Tryptophan 2,3-dioxygenase from Burkholderia ambifaria (strain ATCC BAA-244 / DSM 16087 / CCUG 44356 / LMG 19182 / AMMD) (Burkholderia cepacia (strain AMMD)).